The following is a 328-amino-acid chain: GTP 3',8-cyclase (328 aa).

Residues 1 to 229 (MNTVDYLRIS…ESFVPGNGPA (229 aa)) form the Radical SAM core domain. R8 lines the GTP pocket. Residues C15 and C19 each contribute to the [4Fe-4S] cluster site. S-adenosyl-L-methionine is bound at residue Y21. Residue C22 participates in [4Fe-4S] cluster binding. R60 contributes to the GTP binding site. Residue G64 coordinates S-adenosyl-L-methionine. Residue T91 participates in GTP binding. Position 115 (S115) interacts with S-adenosyl-L-methionine. Residue K155 coordinates GTP. M189 lines the S-adenosyl-L-methionine pocket. [4Fe-4S] cluster-binding residues include C252 and C255. 257 to 259 (RMR) serves as a coordination point for GTP. C269 serves as a coordination point for [4Fe-4S] cluster.

The protein belongs to the radical SAM superfamily. MoaA family. In terms of assembly, monomer and homodimer. [4Fe-4S] cluster serves as cofactor.

The enzyme catalyses GTP + AH2 + S-adenosyl-L-methionine = (8S)-3',8-cyclo-7,8-dihydroguanosine 5'-triphosphate + 5'-deoxyadenosine + L-methionine + A + H(+). Its pathway is cofactor biosynthesis; molybdopterin biosynthesis. Its function is as follows. Catalyzes the cyclization of GTP to (8S)-3',8-cyclo-7,8-dihydroguanosine 5'-triphosphate. In Trichodesmium erythraeum (strain IMS101), this protein is GTP 3',8-cyclase.